A 419-amino-acid chain; its full sequence is L-rhamnose isomerase (419 aa).

3 residues coordinate Mn(2+): H262, D294, and D296.

Belongs to the rhamnose isomerase family. Homotetramer. Mn(2+) serves as cofactor.

It is found in the cytoplasm. The enzyme catalyses L-rhamnopyranose = L-rhamnulose. It functions in the pathway carbohydrate degradation; L-rhamnose degradation; glycerone phosphate from L-rhamnose: step 1/3. Functionally, catalyzes the interconversion of L-rhamnose and L-rhamnulose. The polypeptide is L-rhamnose isomerase (Escherichia coli (strain SMS-3-5 / SECEC)).